Here is a 793-residue protein sequence, read N- to C-terminus: Ferredoxin/F(420)H(2)-dependent CoB-CoM heterodisulfide reductase subunit A (793 aa).

Glycine 147 to glutamate 170 provides a ligand contact to FAD. 4Fe-4S ferredoxin-type domains follow at residues arginine 233–tyrosine 264, glutamine 282–lysine 311, methionine 571–lysine 600, and lysine 601–phenylalanine 629. Residues cysteine 243, cysteine 246, cysteine 250, cysteine 254, cysteine 291, cysteine 294, cysteine 297, cysteine 301, cysteine 580, cysteine 583, cysteine 586, cysteine 590, cysteine 609, cysteine 612, cysteine 615, and cysteine 619 each coordinate [4Fe-4S] cluster.

It belongs to the HdrA family. In terms of assembly, the ferredoxin/F(420)H(2)-dependent CoB-CoM heterodisulfide reductase is composed of three subunits; HdrA2, HdrB2 and HdrC2. The cofactor is [4Fe-4S] cluster. [2Fe-2S] cluster serves as cofactor. It depends on FAD as a cofactor.

It localises to the cytoplasm. The catalysed reaction is coenzyme B + coenzyme M + 2 oxidized [2Fe-2S]-[ferredoxin] = coenzyme M-coenzyme B heterodisulfide + 2 reduced [2Fe-2S]-[ferredoxin] + 2 H(+). The enzyme catalyses coenzyme B + 2 oxidized coenzyme F420-(gamma-L-Glu)(n) + coenzyme M + 2 reduced [2Fe-2S]-[ferredoxin] + 4 H(+) = coenzyme M-coenzyme B heterodisulfide + 2 reduced coenzyme F420-(gamma-L-Glu)(n) + 2 oxidized [2Fe-2S]-[ferredoxin]. It functions in the pathway cofactor metabolism; coenzyme M-coenzyme B heterodisulfide reduction; coenzyme B and coenzyme M from coenzyme M-coenzyme B heterodisulfide: step 1/1. In terms of biological role, part of a complex that catalyzes the reversible reduction of CoM-S-S-CoB to the thiol-coenzymes H-S-CoM (coenzyme M) and H-S-CoB (coenzyme B). Catalyzes the transfer of electrons from ferredoxin to CoM-S-S-CoB during methanogenesis from acetate. Electrons transfer from ferredoxin to CoM-S-S-CoB via HdrA2, HdrC2 and HdrB2. In addition, the complex can use electron bifurcation to direct electron pairs from reduced coenzyme F420 towards the reduction of both ferredoxin and CoB-CoM heterodisulfide. This activity may take place during Fe(III)-dependent anaerobic methane oxidation. In Methanosarcina acetivorans (strain ATCC 35395 / DSM 2834 / JCM 12185 / C2A), this protein is Ferredoxin/F(420)H(2)-dependent CoB-CoM heterodisulfide reductase subunit A.